The primary structure comprises 1705 residues: Rho guanine nucleotide exchange factor 28 (1705 aa).

Disordered stretches follow at residues 287–316 and 473–524; these read RPEE…SAAE and KKRS…ETNT. A phosphoserine mark is found at S313 and S478. The segment covering 501–510 has biased composition (polar residues); the sequence is PGSQSSSRTG. Phosphoserine is present on S624. The segment at 630 to 649 is disordered; sequence MTSPRNKSKTKSKDAKDKEK. Over residues 640–649 the composition is skewed to basic and acidic residues; it reads KSKDAKDKEK. The segment at 652 to 699 adopts a Phorbol-ester/DAG-type zinc-finger fold; it reads RHQFAPGTFSGVLQCLVCDKTLLGKESLQCSNCNANVHKGCKDAAPAC. 2 stretches are compositionally biased toward polar residues: residues 710-721 and 759-775; these read NKPQTILGNSSF and VPGT…TSLE. Residues 710 to 800 form a disordered region; that stretch reads NKPQTILGNS…ELLQSMGSSP (91 aa). The span at 777 to 791 shows a compositional bias: basic and acidic residues; that stretch reads ESDHNSCRSRSHSDE. Residues 849 to 1044 enclose the DH domain; that stretch reads KRQDVIFELM…KDMIATVDLK (196 aa). Positions 1086–1188 constitute a PH domain; sequence TLLYDGLVYW…WMRRIQQAVE (103 aa). A disordered region spans residues 1187–1207; the sequence is VESCPEEKGGRTSESDEDKRK. Positions 1191–1207 are enriched in basic and acidic residues; the sequence is PEEKGGRTSESDEDKRK. Residues 1295-1304 form an interaction with PTK2/FAK1; required for regulation of axonal branching and synapse formation region; sequence AVSQSCEDSC. The interval 1312–1339 is disordered; the sequence is TLSSHDVPGSPTASLVTGGREGRGCSDV. A mediates cytoplasmic retention and interaction with YWHAH region spans residues 1372 to 1383; sequence IIQAIQNLTRLL. The interaction with microtubules stretch occupies residues 1425–1705; it reads QKSRDADRQH…DGAKENIVYL (281 aa). Residues 1488–1525 adopt a coiled-coil conformation; it reads RSRGELDLQLQEYQHSLERLREGQRLVEREQARMRAQQ. The segment at 1496 to 1527 is RNA-binding; sequence QLQEYQHSLERLREGQRLVEREQARMRAQQSL. S1538 carries the phosphoserine modification. The interval 1566–1579 is mediates cytoplasmic retention and interaction with MAPK8IP1; the sequence is FINEALVQMSFNTF. Residues 1638-1705 form a disordered region; it reads PFHESSKDSC…DGAKENIVYL (68 aa). Residues 1641–1655 show a composition bias toward basic and acidic residues; that stretch reads ESSKDSCKNDLDTSH. Positions 1656–1669 are enriched in polar residues; that stretch reads TESPTPHDSNSHRP. Over residues 1688–1699 the composition is skewed to basic and acidic residues; that stretch reads TRQDGETGDGAK.

As to quaternary structure, homooligomer; forms cytoplasmic aggregates. Forms a complex with MAPK8 and MAPK8IP1. Interacts with RHOA. Interacts with microtubules. Interacts with YWHAE and YWHAH. Interacts with PTK2/FAK1. Interacts with NEFL. Interacts with CTNND2; prevents interaction with RHOA. In terms of processing, phosphorylated on tyrosine upon stimulation of cells by laminin.

It localises to the cytoplasm. It is found in the cell membrane. Functions as a RHOA-specific guanine nucleotide exchange factor regulating signaling pathways downstream of integrins and growth factor receptors. Functions in axonal branching, synapse formation and dendritic morphogenesis. Also functions in focal adhesion formation, cell motility and B-lymphocytes activation. May regulate NEFL expression and aggregation and play a role in apoptosis. The polypeptide is Rho guanine nucleotide exchange factor 28 (ARHGEF28) (Homo sapiens (Human)).